A 349-amino-acid polypeptide reads, in one-letter code: Phosphate acetyltransferase (349 aa).

Belongs to the phosphate acetyltransferase and butyryltransferase family.

It is found in the cytoplasm. It catalyses the reaction acetyl-CoA + phosphate = acetyl phosphate + CoA. It participates in metabolic intermediate biosynthesis; acetyl-CoA biosynthesis; acetyl-CoA from acetate: step 2/2. This is Phosphate acetyltransferase (pta) from Rickettsia felis (strain ATCC VR-1525 / URRWXCal2) (Rickettsia azadi).